A 565-amino-acid chain; its full sequence is NAD-dependent malic enzyme (565 aa).

Catalysis depends on tyrosine 104, which acts as the Proton donor. Arginine 157 contacts NAD(+). Lysine 175 acts as the Proton acceptor in catalysis. The a divalent metal cation site is built by glutamate 246, aspartate 247, and aspartate 270. Residues aspartate 270 and asparagine 418 each contribute to the NAD(+) site.

It belongs to the malic enzymes family. As to quaternary structure, homotetramer. It depends on Mg(2+) as a cofactor. The cofactor is Mn(2+).

The catalysed reaction is (S)-malate + NAD(+) = pyruvate + CO2 + NADH. The enzyme catalyses oxaloacetate + H(+) = pyruvate + CO2. This chain is NAD-dependent malic enzyme, found in Salmonella heidelberg (strain SL476).